Here is a 376-residue protein sequence, read N- to C-terminus: Hydroxylysine kinase (376 aa).

Asp229 functions as the Proton acceptor in the catalytic mechanism.

It belongs to the aminoglycoside phosphotransferase family.

The protein localises to the cytoplasm. The catalysed reaction is (5R)-5-hydroxy-L-lysine + GTP = (5R)-5-phosphooxy-L-lysine + GDP + H(+). Functionally, catalyzes the GTP-dependent phosphorylation of 5-hydroxy-L-lysine. This chain is Hydroxylysine kinase (HYKK), found in Bos taurus (Bovine).